Consider the following 325-residue polypeptide: NADH-quinone oxidoreductase subunit H (325 aa).

9 helical membrane-spanning segments follow: residues 11 to 31 (ILLS…CGAF), 50 to 69 (NRVG…KMFF), 81 to 101 (VIFT…FAIV), 114 to 134 (IGIL…LFAG), 154 to 174 (LSYE…AGSF), 186 to 206 (IWNV…GVAV), 237 to 257 (FFVG…TLFF), 265 to 285 (LPPF…FILI), and 304 to 324 (VCLP…LWQA).

This sequence belongs to the complex I subunit 1 family. NDH-1 is composed of 13 different subunits. Subunits NuoA, H, J, K, L, M, N constitute the membrane sector of the complex.

It is found in the cell inner membrane. It catalyses the reaction a quinone + NADH + 5 H(+)(in) = a quinol + NAD(+) + 4 H(+)(out). Functionally, NDH-1 shuttles electrons from NADH, via FMN and iron-sulfur (Fe-S) centers, to quinones in the respiratory chain. The immediate electron acceptor for the enzyme in this species is believed to be ubiquinone. Couples the redox reaction to proton translocation (for every two electrons transferred, four hydrogen ions are translocated across the cytoplasmic membrane), and thus conserves the redox energy in a proton gradient. This subunit may bind ubiquinone. This is NADH-quinone oxidoreductase subunit H from Citrobacter koseri (strain ATCC BAA-895 / CDC 4225-83 / SGSC4696).